The chain runs to 358 residues: Heme A synthase (358 aa).

8 consecutive transmembrane segments (helical) span residues 22–42 (IQVW…VGGA), 107–127 (VLGR…WVTK), 133–153 (IFLQ…IGWW), 172–192 (LAIH…LSRG), 208–228 (FAGW…LVAG), 269–289 (FVHR…ALYV), 302–322 (AIFL…TLLH), and 324–344 (VPIS…CFSV). A heme-binding site is contributed by H271. H332 contributes to the heme binding site.

The protein belongs to the COX15/CtaA family. Type 2 subfamily. Interacts with CtaB. The cofactor is heme b.

The protein resides in the cell membrane. The catalysed reaction is Fe(II)-heme o + 2 A + H2O = Fe(II)-heme a + 2 AH2. It functions in the pathway porphyrin-containing compound metabolism; heme A biosynthesis; heme A from heme O: step 1/1. Its function is as follows. Catalyzes the conversion of heme O to heme A by two successive hydroxylations of the methyl group at C8. The first hydroxylation forms heme I, the second hydroxylation results in an unstable dihydroxymethyl group, which spontaneously dehydrates, resulting in the formyl group of heme A. In Bartonella bacilliformis (strain ATCC 35685 / KC583 / Herrer 020/F12,63), this protein is Heme A synthase.